The sequence spans 739 residues: Catalase-peroxidase 2 (739 aa).

A signal peptide spans Met-1 to Ala-26. The segment at residues Trp-105–Tyr-227 is a cross-link (tryptophyl-tyrosyl-methioninium (Trp-Tyr) (with M-253)). The active-site Proton acceptor is His-106. Residues Tyr-227–Met-253 constitute a cross-link (tryptophyl-tyrosyl-methioninium (Tyr-Met) (with W-105)). Residue His-268 participates in heme b binding.

The protein belongs to the peroxidase family. Peroxidase/catalase subfamily. In terms of assembly, homodimer or homotetramer. Heme b serves as cofactor. Formation of the three residue Trp-Tyr-Met cross-link is important for the catalase, but not the peroxidase activity of the enzyme.

The catalysed reaction is H2O2 + AH2 = A + 2 H2O. It catalyses the reaction 2 H2O2 = O2 + 2 H2O. In terms of biological role, bifunctional enzyme with both catalase and broad-spectrum peroxidase activity. This chain is Catalase-peroxidase 2, found in Shewanella sp. (strain MR-7).